Here is an 856-residue protein sequence, read N- to C-terminus: Valine--tRNA ligase (856 aa).

The short motif at 47-57 is the 'HIGH' region element; the sequence is PTASGVLHIGH. The short motif at 578–582 is the 'KMSKS' region element; it reads KMSKS. Lys-581 is a binding site for ATP.

This sequence belongs to the class-I aminoacyl-tRNA synthetase family. ValS type 2 subfamily. In terms of assembly, monomer.

The protein resides in the cytoplasm. The catalysed reaction is tRNA(Val) + L-valine + ATP = L-valyl-tRNA(Val) + AMP + diphosphate. Functionally, catalyzes the attachment of valine to tRNA(Val). As ValRS can inadvertently accommodate and process structurally similar amino acids such as threonine, to avoid such errors, it has a 'posttransfer' editing activity that hydrolyzes mischarged Thr-tRNA(Val) in a tRNA-dependent manner. This Tropheryma whipplei (strain Twist) (Whipple's bacillus) protein is Valine--tRNA ligase.